The chain runs to 477 residues: UDP-N-acetylmuramoylalanine--D-glutamate ligase (477 aa).

127 to 133 (GTNGKTT) contacts ATP.

It belongs to the MurCDEF family.

The protein resides in the cytoplasm. The enzyme catalyses UDP-N-acetyl-alpha-D-muramoyl-L-alanine + D-glutamate + ATP = UDP-N-acetyl-alpha-D-muramoyl-L-alanyl-D-glutamate + ADP + phosphate + H(+). Its pathway is cell wall biogenesis; peptidoglycan biosynthesis. In terms of biological role, cell wall formation. Catalyzes the addition of glutamate to the nucleotide precursor UDP-N-acetylmuramoyl-L-alanine (UMA). The chain is UDP-N-acetylmuramoylalanine--D-glutamate ligase from Prochlorococcus marinus (strain MIT 9515).